A 450-amino-acid chain; its full sequence is MPHNSIRSGHGGLNQLGGAFVNGRPLPEVVRQRIVDLAHQGVRPCDISRQLRVSHGCVSKILGRYYETGSIRPGVIGGSKPKVATPKVVEKIGDYKRQNPTMFAWEIRDRLLAEGVCDNDTVPSVSSINRIIRTKVQQPFNLPMDSCVATKSLSPGHTLIPSSAVTPPESPQSDSLGSTYSINGLLGIAQPGSDKRKMDDSDQDSCRLSIDSQSSSSGPRKHLRTDAFSQHHLEPLECPFERQHYPEAYASPSHTKGEQGLYPLPLLNSTLDDGKATLTPSNTPLGRNLSTHQTYPVVADPHSPFAIKQETPEVSSSSSTPSSLSSSAFLDLQQVGSGVPPFNAFPHAASVYGQFTGQALLSGREMVGPTLPGYPPHIPTSGQGSYASSAIAGMVAGSEYSGNAYGHTPYSSYSEAWRFPNSSLLSSPYYYSSTSRPSAPPTTATAFDHL.

Residues 9 to 135 constitute a DNA-binding region (paired); the sequence is GHGGLNQLGG…SSINRIIRTK (127 aa). The segment at 12–68 is PAI subdomain; sequence GLNQLGGAFVNGRPLPEVVRQRIVDLAHQGVRPCDISRQLRVSHGCVSKILGRYYET. The interval 87-135 is RED subdomain; that stretch reads KVVEKIGDYKRQNPTMFAWEIRDRLLAEGVCDNDTVPSVSSINRIIRTK. Positions 159-182 are enriched in polar residues; it reads LIPSSAVTPPESPQSDSLGSTYSI. Residues 159–222 are disordered; sequence LIPSSAVTPP…QSSSSGPRKH (64 aa). Serine 303 carries the post-translational modification Phosphoserine.

In terms of assembly, interacts with WWTR1. Expressed in the excretory system, thyroid gland and Wilms tumors.

Its subcellular location is the nucleus. In terms of biological role, transcription factor for the thyroid-specific expression of the genes exclusively expressed in the thyroid cell type, maintaining the functional differentiation of such cells. This Homo sapiens (Human) protein is Paired box protein Pax-8 (PAX8).